A 151-amino-acid polypeptide reads, in one-letter code: FIS1-related protein fis-2 (151 aa).

A helical membrane pass occupies residues 126–146; sequence LIGAAIVGGGALALAGLVAIF.

This sequence belongs to the FIS1 family.

The protein localises to the mitochondrion outer membrane. It is found in the peroxisome membrane. Its subcellular location is the mitochondrion. Involved in the fragmentation of the mitochondrial network. Involved in perinuclear clustering of the mitochondrial network. May act, redundantly with fis-1, downstream of mitochondrial fission, before the fission products participate in mitochondrial homeostasis, mitophagy, or apoptosis. Plays a role in apoptosis by promoting mitochondrial elimination and cell-death execution, acting downstream of caspase ced-3, and perhaps independently of dynamin GTPase drp-1, caspase ced-9 and apoptosis-inducing factor AIFM/wah-1. The chain is FIS1-related protein fis-2 from Caenorhabditis elegans.